A 648-amino-acid polypeptide reads, in one-letter code: 60 kDa heat shock protein homolog 1, mitochondrial (648 aa).

Residues 1 to 55 constitute a mitochondrion transit peptide; that stretch reads MFRSCVPKAITSSRCFARMYSKDVRFGSGVRAMMIRGVDILADAVAVTMGPKGRS.

Belongs to the chaperonin (HSP60) family.

It is found in the mitochondrion matrix. In terms of biological role, prevents misfolding and promotes the refolding and proper assembly of unfolded polypeptides generated under stress conditions. The chain is 60 kDa heat shock protein homolog 1, mitochondrial (Hsp60B) from Drosophila melanogaster (Fruit fly).